Reading from the N-terminus, the 352-residue chain is NAD-dependent protein deacetylase sirtuin-2 (352 aa).

Ser-16 is subject to Phosphoserine. Residues 20–301 (RLLDELTLEG…LALAELLGWK (282 aa)) enclose the Deacetylase sirtuin-type domain. NAD(+) contacts are provided by residues 48–52 (AGIST) and 58–60 (DFR). A Phosphoserine modification is found at Ser-63. NAD(+) is bound at residue 130–133 (QNID). The active-site Proton acceptor is the His-150. Zn(2+) is bound by residues Cys-158 and Cys-163. At Ser-170 the chain carries Phosphoserine. 2 residues coordinate Zn(2+): Cys-184 and Cys-187. NAD(+) is bound by residues 225–226 (TS), 249–251 (NKE), and Cys-287. Residues 314–352 (SIDAQSGAGVPNPSTSASPKKSPPPAKDEARTTEREKPQ) form a disordered region. Residues 324-333 (PNPSTSASPK) are compositionally biased toward low complexity. A phosphoserine mark is found at Ser-331 and Ser-335. Basic and acidic residues predominate over residues 339–352 (AKDEARTTEREKPQ).

It belongs to the sirtuin family. Class I subfamily. As to quaternary structure, interacts with CDC20, FOXO3 and FZR1. Associates with microtubules in primary cortical mature neurons. Homotrimer. Interacts (via both phosphorylated, unphosphorylated, active or inactive forms) with HDAC6; the interaction is necessary for the complex to interact with alpha-tubulin, suggesting that these proteins belong to a large complex that deacetylates the cytoskeleton. Interacts with FOXO1; the interaction is disrupted upon serum-starvation or oxidative stress, leading to increased level of acetylated FOXO1 and induction of autophagy. Interacts with RELA; the interaction occurs in the cytoplasm and is increased in a TNF-alpha-dependent manner. Interacts with HOXA10; the interaction is direct. Interacts with YWHAB and YWHAG; the interactions occur in a AKT-dependent manner and increase SIRT2-dependent TP53 deacetylation. Interacts with MAPK1/ERK2 and MAPK3/ERK1; the interactions increase SIRT2 stability and deacetylation activity. Interacts (phosphorylated form) with KMT5A isoform 2; the interaction is direct, stimulates KMT5A-mediated methyltransferase activity on histone at 'Lys-20' (H4K20me1) and is increased in a H(2)O(2)-induced oxidative stress-dependent manner. Interacts with G6PD; the interaction is enhanced by H(2)O(2) treatment. Interacts with a G1/S-specific cyclin E-CDK2 complex. Interacts with AURKA, CDK5R1 (p35 form) and CDK5 and HIF1A. Interacts with the tRNA ligase SARS1; recruited to the VEGFA promoter via interaction with SARS1. Interacts with BEX4; negatively regulates alpha-tubulin deacetylation by SIRT2. Interacts with MORN3; the interaction enhances the ubiquitination of p53/TP53. Zn(2+) is required as a cofactor. Phosphorylated at phosphoserine and phosphothreonine. Phosphorylated at Ser-331 by a mitotic kinase CDK1/cyclin B at the G2/M transition; phosphorylation regulates the delay in cell-cycle progression. Phosphorylated at Ser-331 by a mitotic kinase G1/S-specific cyclin E/Cdk2 complex; phosphorylation inactivates SIRT2-mediated alpha-tubulin deacetylation and thereby negatively regulates cell adhesion, cell migration and neurite outgrowth during neuronal differentiation. Phosphorylated by cyclin A/Cdk2 and p35-Cdk5 complexes and to a lesser extent by the cyclin D3/Cdk4 and cyclin B/Cdk1, in vitro. Dephosphorylated at Ser-331 by CDC14A and CDC14B around early anaphase. In terms of processing, acetylated by EP300; acetylation leads both to the decreased of SIRT2-mediated alpha-tubulin deacetylase activity and SIRT2-mediated down-regulation of TP53 transcriptional activity. Post-translationally, ubiquitinated.

The protein resides in the nucleus. The protein localises to the cytoplasm. Its subcellular location is the perinuclear region. It is found in the cytoskeleton. It localises to the microtubule organizing center. The protein resides in the centrosome. The protein localises to the centriole. Its subcellular location is the spindle. It is found in the midbody. It localises to the chromosome. The protein resides in the perikaryon. The protein localises to the cell projection. Its subcellular location is the growth cone. It is found in the myelin membrane. The enzyme catalyses N(6)-acetyl-L-lysyl-[protein] + NAD(+) + H2O = 2''-O-acetyl-ADP-D-ribose + nicotinamide + L-lysyl-[protein]. It catalyses the reaction N(6)-tetradecanoyl-L-lysyl-[protein] + NAD(+) + H2O = 2''-O-tetradecanoyl-ADP-D-ribose + nicotinamide + L-lysyl-[protein]. The catalysed reaction is N(6)-hexadecanoyl-L-lysyl-[protein] + NAD(+) + H2O = 2''-O-hexadecanoyl-ADP-D-ribose + nicotinamide + L-lysyl-[protein]. With respect to regulation, inhibited by Sirtinol, A3 and M15 small molecules. Inhibited by nicotinamide. Inhibited by a macrocyclic peptide inhibitor S2iL5. Inhibited by EP300-induced acetylation. NAD-dependent protein deacetylase, which deacetylates internal lysines on histone and alpha-tubulin as well as many other proteins such as key transcription factors. Participates in the modulation of multiple and diverse biological processes such as cell cycle control, genomic integrity, microtubule dynamics, cell differentiation, metabolic networks, and autophagy. Plays a major role in the control of cell cycle progression and genomic stability. Functions in the antephase checkpoint preventing precocious mitotic entry in response to microtubule stress agents, and hence allowing proper inheritance of chromosomes. Positively regulates the anaphase promoting complex/cyclosome (APC/C) ubiquitin ligase complex activity by deacetylating CDC20 and FZR1, then allowing progression through mitosis. Associates both with chromatin at transcriptional start sites (TSSs) and enhancers of active genes. Plays a role in cell cycle and chromatin compaction through epigenetic modulation of the regulation of histone H4 'Lys-20' methylation (H4K20me1) during early mitosis. Specifically deacetylates histone H4 at 'Lys-16' (H4K16ac) between the G2/M transition and metaphase enabling H4K20me1 deposition by KMT5A leading to ulterior levels of H4K20me2 and H4K20me3 deposition throughout cell cycle, and mitotic S-phase progression. Deacetylates KMT5A modulating KMT5A chromatin localization during the mitotic stress response. Also deacetylates histone H3 at 'Lys-57' (H3K56ac) during the mitotic G2/M transition. During oocyte meiosis progression, may deacetylate histone H4 at 'Lys-16' (H4K16ac) and alpha-tubulin, regulating spindle assembly and chromosome alignment by influencing microtubule dynamics and kinetochore function. Deacetylates histone H4 at 'Lys-16' (H4K16ac) at the VEGFA promoter and thereby contributes to regulate expression of VEGFA, a key regulator of angiogenesis. Deacetylates alpha-tubulin at 'Lys-40' and hence controls neuronal motility, oligodendroglial cell arbor projection processes and proliferation of non-neuronal cells. Phosphorylation at Ser-368 by a G1/S-specific cyclin E-CDK2 complex inactivates SIRT2-mediated alpha-tubulin deacetylation, negatively regulating cell adhesion, cell migration and neurite outgrowth during neuronal differentiation. Deacetylates PARD3 and participates in the regulation of Schwann cell peripheral myelination formation during early postnatal development and during postinjury remyelination. Involved in several cellular metabolic pathways. Plays a role in the regulation of blood glucose homeostasis by deacetylating and stabilizing phosphoenolpyruvate carboxykinase PCK1 activity in response to low nutrient availability. Acts as a key regulator in the pentose phosphate pathway (PPP) by deacetylating and activating the glucose-6-phosphate G6PD enzyme, and therefore, stimulates the production of cytosolic NADPH to counteract oxidative damage. Maintains energy homeostasis in response to nutrient deprivation as well as energy expenditure by inhibiting adipogenesis and promoting lipolysis. Attenuates adipocyte differentiation by deacetylating and promoting FOXO1 interaction to PPARG and subsequent repression of PPARG-dependent transcriptional activity. Plays a role in the regulation of lysosome-mediated degradation of protein aggregates by autophagy in neuronal cells. Deacetylates FOXO1 in response to oxidative stress or serum deprivation, thereby negatively regulating FOXO1-mediated autophagy. Deacetylates a broad range of transcription factors and co-regulators regulating target gene expression. Deacetylates transcriptional factor FOXO3 stimulating the ubiquitin ligase SCF(SKP2)-mediated FOXO3 ubiquitination and degradation. Deacetylates HIF1A and therefore promotes HIF1A degradation and inhibition of HIF1A transcriptional activity in tumor cells in response to hypoxia. Deacetylates RELA in the cytoplasm inhibiting NF-kappaB-dependent transcription activation upon TNF-alpha stimulation. Inhibits transcriptional activation by deacetylating p53/TP53 and EP300. Also deacetylates EIF5A. Functions as a negative regulator on oxidative stress-tolerance in response to anoxia-reoxygenation conditions. Plays a role as tumor suppressor. In addition to protein deacetylase activity, also has activity toward long-chain fatty acyl groups and mediates protein-lysine demyristoylation and depalmitoylation of target proteins, such as ARF6 and KRAS, thereby regulating their association with membranes. The protein is NAD-dependent protein deacetylase sirtuin-2 (SIRT2) of Pongo abelii (Sumatran orangutan).